Reading from the N-terminus, the 357-residue chain is Probable cinnamyl alcohol dehydrogenase 7/8 (357 aa).

Cysteine 47 provides a ligand contact to Zn(2+). Serine 49 is a binding site for NADP(+). Residues histidine 69, glutamate 70, cysteine 100, cysteine 103, cysteine 106, cysteine 114, and cysteine 163 each coordinate Zn(2+). Residues threonine 167, 188–193 (GLGGVG), 211–216 (SSSDKK), threonine 251, glycine 275, and 298–300 (SFI) contribute to the NADP(+) site.

Belongs to the zinc-containing alcohol dehydrogenase family. As to quaternary structure, homodimer. Zn(2+) serves as cofactor.

It catalyses the reaction (E)-cinnamyl alcohol + NADP(+) = (E)-cinnamaldehyde + NADPH + H(+). The enzyme catalyses (E)-coniferol + NADP(+) = (E)-coniferaldehyde + NADPH + H(+). It carries out the reaction (E)-sinapyl alcohol + NADP(+) = (E)-sinapaldehyde + NADPH + H(+). The catalysed reaction is (E)-4-coumaroyl alcohol + NADP(+) = (E)-4-coumaraldehyde + NADPH + H(+). It catalyses the reaction (E)-caffeyl alcohol + NADP(+) = (E)-caffeyl aldehyde + NADPH + H(+). The protein operates within aromatic compound metabolism; phenylpropanoid biosynthesis. Functionally, involved in lignin biosynthesis. Catalyzes the final step specific for the production of lignin monomers. Catalyzes the NADPH-dependent reduction of coniferaldehyde, 5-hydroxyconiferaldehyde, sinapaldehyde, 4-coumaraldehyde and caffeyl aldehyde to their respective alcohols. This Picea abies (Norway spruce) protein is Probable cinnamyl alcohol dehydrogenase 7/8 (CAD7).